The chain runs to 169 residues: Ribosome maturation factor RimM (169 aa).

A PRC barrel domain is found at 93–166 (GEHEFYYHEI…RIQITPLPGL (74 aa)).

It belongs to the RimM family. As to quaternary structure, binds ribosomal protein uS19.

The protein localises to the cytoplasm. In terms of biological role, an accessory protein needed during the final step in the assembly of 30S ribosomal subunit, possibly for assembly of the head region. Essential for efficient processing of 16S rRNA. May be needed both before and after RbfA during the maturation of 16S rRNA. It has affinity for free ribosomal 30S subunits but not for 70S ribosomes. This Exiguobacterium sibiricum (strain DSM 17290 / CCUG 55495 / CIP 109462 / JCM 13490 / 255-15) protein is Ribosome maturation factor RimM.